The chain runs to 492 residues: Propanoyl-CoA:succinate CoA transferase (492 aa).

260–264 (GVGNI) contributes to the CoA binding site. Catalysis depends on E286, which acts as the 5-glutamyl coenzyme A thioester intermediate. N376 and G380 together coordinate CoA.

The protein belongs to the acetyl-CoA hydrolase/transferase family.

The enzyme catalyses propanoyl-CoA + succinate = propanoate + succinyl-CoA. Functionally, catalyzes the transfer of coenzyme A from propionyl-CoA to succinate. Could be part of a pathway that converts succinate to propionate. The protein is Propanoyl-CoA:succinate CoA transferase of Escherichia coli (strain K12).